Reading from the N-terminus, the 300-residue chain is tRNA pseudouridine synthase B (300 aa).

The active-site Nucleophile is the aspartate 38.

The protein belongs to the pseudouridine synthase TruB family. Type 1 subfamily.

The catalysed reaction is uridine(55) in tRNA = pseudouridine(55) in tRNA. In terms of biological role, responsible for synthesis of pseudouridine from uracil-55 in the psi GC loop of transfer RNAs. The polypeptide is tRNA pseudouridine synthase B (Dehalococcoides mccartyi (strain CBDB1)).